The chain runs to 299 residues: Methylsterol monooxygenase 1-2 (299 aa).

3 consecutive transmembrane segments (helical) span residues 39 to 59, 96 to 116, and 118 to 138; these read CHNI…LVFI, FILV…MIEI, and SGLP…YFLV. Residues 132 to 267 enclose the Fatty acid hydroxylase domain; that stretch reads LVVYFLVEDY…FTYCDYIYGT (136 aa). The short motif at 147 to 151 is the Histidine box-1 element; sequence HRFFH. The short motif at 160–164 is the Histidine box-2 element; the sequence is HHIHH. Residues 189-209 traverse the membrane as a helical segment; sequence TFLGPAIAPGHMITFWLWIAL. Positions 239–245 match the Histidine box-3 motif; it reads YHDYHHY.

Belongs to the sterol desaturase family. As to quaternary structure, interacts with ACBP1. It depends on Fe cation as a cofactor. Expressed in embryo sacs, pollen and trichomes. Observed in leaves, roots, siliques and flowers.

The protein localises to the endoplasmic reticulum membrane. It carries out the reaction 4,4-dimethyl-5alpha-cholest-7-en-3beta-ol + 6 Fe(II)-[cytochrome b5] + 3 O2 + 5 H(+) = 4alpha-carboxy-4beta-methyl-5alpha-cholest-7-ene-3beta-ol + 6 Fe(III)-[cytochrome b5] + 4 H2O. The catalysed reaction is 24-methylenecycloartanol + 6 Fe(II)-[cytochrome b5] + 3 O2 + 5 H(+) = 4alpha-carboxy-4beta,14alpha-dimethyl-9beta,19-cyclo-5alpha-ergost-24(24(1))-en-3beta-ol + 6 Fe(III)-[cytochrome b5] + 4 H2O. Non-heme iron oxygenase involved in sterols biosynthesis by catalyzing the removal of the first methyl group at the C-4 position. 4,4-dimethyl-9-beta,19-cyclopropylsterols such as 24-methylenecycloartanol are the preferred substrates. Acts as a rate-limiting enzyme in the sterol pathway via interaction with ACBP1; sterols serve as lipid modulators for gene expression of homeodomain-leucine zipper IV transcription factors. Together with SMO1-1, involved in the maintenance of sterol composition to balance auxin and cytokinin activities during embryogenesis. This chain is Methylsterol monooxygenase 1-2, found in Arabidopsis thaliana (Mouse-ear cress).